The primary structure comprises 448 residues: Velvet complex subunit 2 (448 aa).

Disordered stretches follow at residues 1–153 (MNSA…SKIE) and 224–306 (EPGT…NGYG). Over residues 15–34 (PGPAYSSSAPPPIHTYQQHQ) the composition is skewed to low complexity. Composition is skewed to pro residues over residues 35–44 (HPPPPLPPPS) and 52–61 (PPLPPPPSAP). A compositionally biased stretch (low complexity) spans 96–107 (APYQQSQPSQYP). The segment covering 116-132 (VPPPSQHDEPPPPPSSG) has biased composition (pro residues). Residues 155 to 431 (GSGWKYSLDV…ANQGIKIPIR (277 aa)) form the Velvet domain. Residues 260 to 292 (QQSYGPAPSYPPSSSYGPPQQYYPRHSGYSAEP) are compositionally biased toward low complexity.

Belongs to the velvet family. VelB subfamily. As to quaternary structure, component of the heterotrimeric velvet complex composed of LAE1, VE1 and VELB; VE1 acting as a bridging protein between LAE1 and VEL2. Interacts with VE1. Forms a heterodimeric complex with VOS1; the formation of the VELB-VOS1 complex is light-dependent.

Its subcellular location is the nucleus. It localises to the cytoplasm. Its function is as follows. Component of the velvet transcription factor complex that controls sexual/asexual developmental ratio in response to light, promoting sexual development in the darkness while stimulating asexual sporulation under illumination. The velvet complex acts as a global regulator for secondary metabolite gene expression. Component of the VELB-VOS1 heterodimeric complex that plays a dual role in activating genes associated with spore maturation and repressing certain development-associated genes. The VELB-VOS1 complex binds DNA through the DNA-binding domain of VOS1 that recognizes an 11-nucleotide consensus sequence 5'-CTGGCCGCGGC-3' consisting of two motifs in the promoters of key developmental regulatory genes. Controls the expression of the fumonisins gene cluster. Involved in cell wall integrity, cell surface hydrophobicity, hyphal polarity and conidiation pattern. Involved in oxidative stress resistance by positively regulating the transcription of the catalase-encoding gene CAT2. In Gibberella moniliformis (strain M3125 / FGSC 7600) (Maize ear and stalk rot fungus), this protein is Velvet complex subunit 2.